The following is a 225-amino-acid chain: MAGTGLVAGEVVVDALPYFDQGYEAPGVREAAAALVEEETRRYRPTKNYLSYLTAPDYSAFETDIMRNEFERLAARQPIELLSMKRYELPAPSSGQKNDITAWQECVNNSMAQLEHQAVRIENLELMSQHGCNAWKVYNENLVHMIEHAQKELQKLRKHIQDLNWQRKNMQLTAGSKLREMESNWVSLVSKNYEIERTIVQLENEIYQIKQQHGEANKENIRQDF.

Position 2 is an N-acetylalanine (Ala-2). Ser-94 carries the phosphoserine modification. Positions Tyr-138–Arg-222 form a coiled coil.

This sequence belongs to the SPF27 family. As to quaternary structure, component of the pre-catalytic and catalytic spliceosome complexes. Component of the postcatalytic spliceosome P complex. Component of the PRP19-CDC5L splicing complex composed of a core complex comprising a homotetramer of PRPF19, CDC5L, PLRG1 and BCAS2, and at least three less stably associated proteins CTNNBL1, CWC15 and HSPA8. Interacts directly in the complex with PRPF19, CDC5L and PLRG1. In terms of tissue distribution, ubiquitously expressed.

The protein localises to the nucleus. The protein resides in the nucleolus. Required for pre-mRNA splicing as component of the activated spliceosome. Component of the PRP19-CDC5L complex that forms an integral part of the spliceosome and is required for activating pre-mRNA splicing. May have a scaffolding role in the spliceosome assembly as it contacts all other components of the core complex. The PRP19-CDC5L complex may also play a role in the response to DNA damage (DDR). This chain is Pre-mRNA-splicing factor SPF27 (BCAS2), found in Homo sapiens (Human).